We begin with the raw amino-acid sequence, 126 residues long: Large ribosomal subunit protein bL20 (126 aa).

This sequence belongs to the bacterial ribosomal protein bL20 family.

Functionally, binds directly to 23S ribosomal RNA and is necessary for the in vitro assembly process of the 50S ribosomal subunit. It is not involved in the protein synthesizing functions of that subunit. This chain is Large ribosomal subunit protein bL20, found in Buchnera aphidicola subsp. Baizongia pistaciae (strain Bp).